The primary structure comprises 63 residues: Alpha-conotoxin-like Am1.6 (63 aa).

Residues methionine 1 to serine 21 form the signal peptide. Positions phenylalanine 22 to arginine 46 are excised as a propeptide. Positions serine 50–proline 52 are ser-Xaa-Pro motif, crucial for potent interaction with nAChR.

Belongs to the conotoxin A superfamily. Is not hydroxylated. In terms of processing, contains 2 disulfide bonds. As to expression, expressed by the venom duct.

It localises to the secreted. Alpha-conotoxins act on postsynaptic membranes, they bind to the nicotinic acetylcholine receptors (nAChR) and thus inhibit them. This is Alpha-conotoxin-like Am1.6 from Conus amadis (Amadis cone).